Reading from the N-terminus, the 133-residue chain is UPF0102 protein bll0669 (133 aa).

The protein belongs to the UPF0102 family.

The polypeptide is UPF0102 protein bll0669 (Bradyrhizobium diazoefficiens (strain JCM 10833 / BCRC 13528 / IAM 13628 / NBRC 14792 / USDA 110)).